A 2273-amino-acid polypeptide reads, in one-letter code: Acetyl-CoA carboxylase, mitochondrial (2273 aa).

The transit peptide at 1–104 (KGKTITHGQS…RGNIHKHTRL (104 aa)) directs the protein to the mitochondrion. A Biotin carboxylation domain is found at 134-635 (VISKILIANN…STGWLDDLIL (502 aa)). Positions 292 to 484 (KTNFVSVPDD…LPATQLQIAM (193 aa)) constitute an ATP-grasp domain. 332 to 337 (GGGGKG) provides a ligand contact to ATP. Residue Arg459 is part of the active site. In terms of domain architecture, Biotinyl-binding spans 763–837 (LEAELNPTQV…EAGDVIAKLT (75 aa)). The residue at position 804 (Lys804) is an N6-biotinyllysine. The region spanning 1532 to 1867 (PYSVKDWLQP…KRDMSPPLLE (336 aa)) is the CoA carboxyltransferase N-terminal domain. Residues 1532 to 2187 (PYSVKDWLQP…EGQVIKRLQK (656 aa)) are carboxyltransferase. CoA contacts are provided by Arg1776, Lys2080, and Arg2082. Positions 1871 to 2187 (RWDRDVDFKP…EGQVIKRLQK (317 aa)) constitute a CoA carboxyltransferase C-terminal domain.

Requires biotin as cofactor.

It localises to the mitochondrion. The enzyme catalyses hydrogencarbonate + acetyl-CoA + ATP = malonyl-CoA + ADP + phosphate + H(+). It carries out the reaction N(6)-biotinyl-L-lysyl-[protein] + hydrogencarbonate + ATP = N(6)-carboxybiotinyl-L-lysyl-[protein] + ADP + phosphate + H(+). Its pathway is lipid metabolism; malonyl-CoA biosynthesis; malonyl-CoA from acetyl-CoA: step 1/1. In terms of biological role, catalyzes the rate-limiting reaction in the mitochondrial fatty acid synthesis (FAS) type II pathway. Responsible for the production of the mitochondrial malonyl-CoA, used for the biosynthesis of the cofactor lipoic acid. This protein carries three functions: biotin carboxyl carrier protein, biotin carboxylase, and carboxyltransferase. The chain is Acetyl-CoA carboxylase, mitochondrial (HFA1) from Saccharomyces cerevisiae (strain Lalvin EC1118 / Prise de mousse) (Baker's yeast).